The primary structure comprises 179 residues: Interleukin-22b (179 aa).

The N-terminal stretch at 1 to 33 (MAVLQKSMSFSLMGTLAASCLLLIALWAQEANA) is a signal peptide. 2 disulfide bridges follow: Cys40–Cys132 and Cys89–Cys178. Asn54, Asn68, and Asn97 each carry an N-linked (GlcNAc...) asparagine glycan.

It belongs to the IL-10 family.

It localises to the secreted. Functionally, cytokine that contributes to the inflammatory response in vivo. This is Interleukin-22b from Mus musculus (Mouse).